The following is a 331-amino-acid chain: Fructose-1,6-bisphosphatase class 1 2 (331 aa).

Mg(2+)-binding residues include glutamate 91, aspartate 112, leucine 114, and aspartate 115. Substrate is bound by residues 115–118 (DGSS), asparagine 207, tyrosine 238, and lysine 268. Mg(2+) is bound at residue glutamate 274.

Belongs to the FBPase class 1 family. As to quaternary structure, homotetramer. It depends on Mg(2+) as a cofactor.

The protein resides in the cytoplasm. The enzyme catalyses beta-D-fructose 1,6-bisphosphate + H2O = beta-D-fructose 6-phosphate + phosphate. It functions in the pathway carbohydrate biosynthesis; Calvin cycle. The sequence is that of Fructose-1,6-bisphosphatase class 1 2 from Acaryochloris marina (strain MBIC 11017).